A 210-amino-acid polypeptide reads, in one-letter code: Signal peptidase complex catalytic subunit SEC11 (210 aa).

At 1–21 (MLAGLSPHLSNLRRSLTQVLN) the chain is on the cytoplasmic side. The helical; Signal-anchor for type II membrane protein transmembrane segment at 22-38 (FALVLSTAFMMWKGLSI) threads the bilayer. Over 39–210 (YTNSSSPIVV…MGAMVILQRE (172 aa)) the chain is Lumenal. Residue Asn41 is glycosylated (N-linked (GlcNAc...) asparagine). Residues Ser53, His92, and Asp152 each act as charge relay system in the active site. Residues 196 to 207 (VLLGIMGAMVIL) form a C-terminal short (CTS) helix region.

It belongs to the peptidase S26B family. Component of the signal peptidase complex (SPC) composed of a catalytic subunit SEC11 and three accessory subunits SPC1, SPC2 and SPC3. The complex induces a local thinning of the ER membrane which is used to measure the length of the signal peptide (SP) h-region of protein substrates. This ensures the selectivity of the complex towards h-regions shorter than 18-20 amino acids. SPC associates with the translocon complex.

It is found in the endoplasmic reticulum membrane. It catalyses the reaction Cleavage of hydrophobic, N-terminal signal or leader sequences from secreted and periplasmic proteins.. Functionally, catalytic component of the signal peptidase complex (SPC) which catalyzes the cleavage of N-terminal signal sequences from nascent proteins as they are translocated into the lumen of the endoplasmic reticulum. Specifically cleaves N-terminal signal peptides that contain a hydrophobic alpha-helix (h-region) shorter than 18-20 amino acids. The polypeptide is Signal peptidase complex catalytic subunit SEC11 (SEC11) (Coccidioides posadasii (strain C735) (Valley fever fungus)).